Reading from the N-terminus, the 529-residue chain is Bifunctional purine biosynthesis protein PurH (529 aa).

In terms of domain architecture, MGS-like spans M1–V148. K287 is modified (N6-acetyllysine).

This sequence belongs to the PurH family.

It catalyses the reaction (6R)-10-formyltetrahydrofolate + 5-amino-1-(5-phospho-beta-D-ribosyl)imidazole-4-carboxamide = 5-formamido-1-(5-phospho-D-ribosyl)imidazole-4-carboxamide + (6S)-5,6,7,8-tetrahydrofolate. The enzyme catalyses IMP + H2O = 5-formamido-1-(5-phospho-D-ribosyl)imidazole-4-carboxamide. The protein operates within purine metabolism; IMP biosynthesis via de novo pathway; 5-formamido-1-(5-phospho-D-ribosyl)imidazole-4-carboxamide from 5-amino-1-(5-phospho-D-ribosyl)imidazole-4-carboxamide (10-formyl THF route): step 1/1. It participates in purine metabolism; IMP biosynthesis via de novo pathway; IMP from 5-formamido-1-(5-phospho-D-ribosyl)imidazole-4-carboxamide: step 1/1. The polypeptide is Bifunctional purine biosynthesis protein PurH (Escherichia coli O157:H7).